The sequence spans 1347 residues: Protocadherin-11 X-linked (1347 aa).

A signal peptide spans 1 to 23; it reads MDLLSGTYIFAVLLACVVFHSGA. The Extracellular portion of the chain corresponds to 24 to 812; sequence QEKNYTIREE…VSSPTSDYVK (789 aa). Cadherin domains are found at residues 26–139, 140–249, 250–355, 362–466, 467–570, 571–673, and 677–795; these read KNYT…APLF, PATV…HPVF, KETE…VPSI, NPVN…APVF, TQSF…SPVF, THNE…KPVF, and PSNC…APVT. N-linked (GlcNAc...) asparagine glycans are attached at residues asparagine 27, asparagine 48, and asparagine 54. Asparagine 344 carries N-linked (GlcNAc...) asparagine glycosylation. Asparagine 553 carries an N-linked (GlcNAc...) asparagine glycan. An N-linked (GlcNAc...) asparagine glycan is attached at asparagine 773. Residues 813–833 form a helical membrane-spanning segment; that stretch reads ILVAAVAGTITVVVVIFITAV. The Cytoplasmic portion of the chain corresponds to 834–1347; sequence VRCRQAPHLK…DSPIMEEHPL (514 aa). Disordered regions lie at residues 1057 to 1091, 1097 to 1116, and 1326 to 1347; these read LPEG…GYPQ, RATP…ESTF, and FTPR…EHPL.

In terms of tissue distribution, expressed strongly in fetal brain and brain (cortex, amygdala, thalamus, substantia nigra, hippocampus, caudate nucleus and corpus callosum). Expressed at low level in testis.

The protein localises to the cell membrane. Potential calcium-dependent cell-adhesion protein. The chain is Protocadherin-11 X-linked (PCDH11X) from Homo sapiens (Human).